A 113-amino-acid chain; its full sequence is Hydrogenase maturation factor HypA (113 aa).

Histidine 2 serves as a coordination point for Ni(2+). Zn(2+) is bound by residues cysteine 73, cysteine 76, cysteine 89, and cysteine 92.

This sequence belongs to the HypA/HybF family.

Its function is as follows. Involved in the maturation of [NiFe] hydrogenases. Required for nickel insertion into the metal center of the hydrogenase. This Picosynechococcus sp. (strain ATCC 27264 / PCC 7002 / PR-6) (Agmenellum quadruplicatum) protein is Hydrogenase maturation factor HypA.